The chain runs to 351 residues: MDDKKAANNSEKSKALAAALAQIEKQFGKGSVMRMEDGVIAEEIQAVSTGSLGLDIALGIGGLPRGRVIEIYGPESSGKTTLTLQSIAEMQKLGGTCAFIDAEHALDVTYAQKLGVNLNDLLISQPDTGEQALEICDALVRSGAVDLIVVDSVAALTPKAEIEGDMGDSLPGLQARLMSQALRKLTGSINRTNTTVIFINQIRMKIGVMFGNPETTTGGNALKFYASVRLDIRRTGSIKSGDEVIGSETKVKVVKNKVAPPFREAHFDILYGEGTSREGEILDLGSEHKVVEKSGAWYSYNGERIGQGKDNARNYLKEHPELAREIENKVRVALGVPELAGGEAEAEAKAS.

Position 73–80 (Gly73–Thr80) interacts with ATP.

It belongs to the RecA family.

The protein resides in the cytoplasm. Can catalyze the hydrolysis of ATP in the presence of single-stranded DNA, the ATP-dependent uptake of single-stranded DNA by duplex DNA, and the ATP-dependent hybridization of homologous single-stranded DNAs. It interacts with LexA causing its activation and leading to its autocatalytic cleavage. This Herbaspirillum seropedicae protein is Protein RecA.